Consider the following 382-residue polypeptide: MAQIREIDVGEVRTRFARGWHCLGLSRTFKDGKPHAVEAFGTKLVVWADSNGEPKVLDAYCRHMGGDLSQGEIKGDSVACPFHDWRWGGNGKCTDIPYARRVPPLARTRSWITMEKHGQLFVWNDPEGNTPPPEVTIPEIEQYGSDEWTDWTWNQIRIEGSNCREIIDNVVDMAHFFYIHYAFPTFFKNVFEGHIAEQYLNTRGRPDKGMATQYGLESTLESYAAYYGPSYMINPLKNNYGGYQTESVLINCHYPITHDSFMLQYGIIVKKPQGMSPEQSDVLAAKLTEGVGEGFLQDVEIWKNKTKIENPLLCEEDGPVYQLRRWYEQFYVDVADVTEKMTGRFEFEVDTAKANEAWEKEVAENLERKKREEEQGKQEAEV.

The region spanning 20-122 (WHCLGLSRTF…TMEKHGQLFV (103 aa)) is the Rieske domain. Positions 61, 63, 80, and 83 each coordinate [2Fe-2S] cluster. N169, H175, H180, and D298 together coordinate Fe cation.

In terms of assembly, homotrimer. The two-component system 3-ketosteroid-9-alpha-monooxygenase is composed of an oxygenase component KshA and a reductase component KshB. The cofactor is [2Fe-2S] cluster. Requires Fe cation as cofactor.

The enzyme catalyses androsta-1,4-diene-3,17-dione + 2 reduced [2Fe-2S]-[ferredoxin] + O2 + 2 H(+) = 9alpha-hydroxyandrosta-1,4-diene-3,17-dione + 2 oxidized [2Fe-2S]-[ferredoxin] + H2O. Its function is as follows. In vitro, catalyzes the introduction of a 9alpha-hydroxyl moiety into the ring B of 3-ketosteroid substrates such as 1,4-androstadiene-3,17-dione (ADD), 4-androstene-3,17-dione (AD), 4-androstene-17beta-ol-3-one (testosterone), 4-pregnene-3,20-dione (progesterone), 23,24-bisnorcholesta-4-ene-22-oate and 23,24-bisnorcholesta-1,4-diene-22-oate. The sequence is that of 3-ketosteroid-9-alpha-monooxygenase, oxygenase component from Rhodococcus rhodochrous.